Here is a 404-residue protein sequence, read N- to C-terminus: Succinyl-diaminopimelate desuccinylase (404 aa).

Position 80 (His-80) interacts with Zn(2+). The active site involves Asp-82. Zn(2+) is bound at residue Asp-113. Glu-147 serves as the catalytic Proton acceptor. Residues Glu-148, Glu-176, and His-373 each contribute to the Zn(2+) site.

It belongs to the peptidase M20A family. DapE subfamily. In terms of assembly, homodimer. Zn(2+) is required as a cofactor. Co(2+) serves as cofactor.

The enzyme catalyses N-succinyl-(2S,6S)-2,6-diaminopimelate + H2O = (2S,6S)-2,6-diaminopimelate + succinate. Its pathway is amino-acid biosynthesis; L-lysine biosynthesis via DAP pathway; LL-2,6-diaminopimelate from (S)-tetrahydrodipicolinate (succinylase route): step 3/3. Its function is as follows. Catalyzes the hydrolysis of N-succinyl-L,L-diaminopimelic acid (SDAP), forming succinate and LL-2,6-diaminopimelate (DAP), an intermediate involved in the bacterial biosynthesis of lysine and meso-diaminopimelic acid, an essential component of bacterial cell walls. This chain is Succinyl-diaminopimelate desuccinylase, found in Allorhizobium ampelinum (strain ATCC BAA-846 / DSM 112012 / S4) (Agrobacterium vitis (strain S4)).